A 251-amino-acid chain; its full sequence is Ubiquinone/menaquinone biosynthesis C-methyltransferase UbiE (251 aa).

Residues Thr74, Asp95, and 123–124 contribute to the S-adenosyl-L-methionine site; that span reads NA.

The protein belongs to the class I-like SAM-binding methyltransferase superfamily. MenG/UbiE family.

It carries out the reaction a 2-demethylmenaquinol + S-adenosyl-L-methionine = a menaquinol + S-adenosyl-L-homocysteine + H(+). It catalyses the reaction a 2-methoxy-6-(all-trans-polyprenyl)benzene-1,4-diol + S-adenosyl-L-methionine = a 5-methoxy-2-methyl-3-(all-trans-polyprenyl)benzene-1,4-diol + S-adenosyl-L-homocysteine + H(+). The protein operates within quinol/quinone metabolism; menaquinone biosynthesis; menaquinol from 1,4-dihydroxy-2-naphthoate: step 2/2. It participates in cofactor biosynthesis; ubiquinone biosynthesis. Its function is as follows. Methyltransferase required for the conversion of demethylmenaquinol (DMKH2) to menaquinol (MKH2) and the conversion of 2-polyprenyl-6-methoxy-1,4-benzoquinol (DDMQH2) to 2-polyprenyl-3-methyl-6-methoxy-1,4-benzoquinol (DMQH2). In Shewanella pealeana (strain ATCC 700345 / ANG-SQ1), this protein is Ubiquinone/menaquinone biosynthesis C-methyltransferase UbiE.